The following is a 175-amino-acid chain: Epididymal-specific lipocalin-8 (175 aa).

An N-terminal signal peptide occupies residues 1–22; it reads MEARLLSNVCGFFLVFLLQAES. 2 N-linked (GlcNAc...) asparagine glycosylation sites follow: N66 and N74. A disulfide bond links C79 and C166.

Belongs to the calycin superfamily. Lipocalin family. Predominantly expressed in epididymis.

It localises to the secreted. May play a role in male fertility. May act as a retinoid carrier protein within the epididymis. This chain is Epididymal-specific lipocalin-8 (Lcn8), found in Mus musculus (Mouse).